The sequence spans 112 residues: T cell receptor alpha variable 2 (112 aa).

The N-terminal stretch at 1-25 (MALQSTLGAVWLGLLLNSLWKVAES) is a signal peptide. An Ig-like domain is found at 26–112 (KDQVFQPSTV…DAAVYYCAVE (87 aa)). C47 and C109 form a disulfide bridge. Residues N48 and N84 are each glycosylated (N-linked (GlcNAc...) asparagine).

Alpha-beta TR is a heterodimer composed of an alpha and beta chain; disulfide-linked. The alpha-beta TR is associated with the transmembrane signaling CD3 coreceptor proteins to form the TR-CD3 (TcR or TCR). The assembly of alpha-beta TR heterodimers with CD3 occurs in the endoplasmic reticulum where a single alpha-beta TR heterodimer associates with one CD3D-CD3E heterodimer, one CD3G-CD3E heterodimer and one CD247 homodimer forming a stable octameric structure. CD3D-CD3E and CD3G-CD3E heterodimers preferentially associate with TR alpha and TR beta chains, respectively. The association of the CD247 homodimer is the last step of TcR assembly in the endoplasmic reticulum and is required for transport to the cell surface.

The protein resides in the cell membrane. In terms of biological role, v region of the variable domain of T cell receptor (TR) alpha chain that participates in the antigen recognition. Alpha-beta T cell receptors are antigen specific receptors which are essential to the immune response and are present on the cell surface of T lymphocytes. Recognize peptide-major histocompatibility (MH) (pMH) complexes that are displayed by antigen presenting cells (APC), a prerequisite for efficient T cell adaptive immunity against pathogens. Binding of alpha-beta TR to pMH complex initiates TR-CD3 clustering on the cell surface and intracellular activation of LCK that phosphorylates the ITAM motifs of CD3G, CD3D, CD3E and CD247 enabling the recruitment of ZAP70. In turn ZAP70 phosphorylates LAT, which recruits numerous signaling molecules to form the LAT signalosome. The LAT signalosome propagates signal branching to three major signaling pathways, the calcium, the mitogen-activated protein kinase (MAPK) kinase and the nuclear factor NF-kappa-B (NF-kB) pathways, leading to the mobilization of transcription factors that are critical for gene expression and essential for T cell growth and differentiation. The T cell repertoire is generated in the thymus, by V-(D)-J rearrangement. This repertoire is then shaped by intrathymic selection events to generate a peripheral T cell pool of self-MH restricted, non-autoaggressive T cells. Post-thymic interaction of alpha-beta TR with the pMH complexes shapes TR structural and functional avidity. The sequence is that of T cell receptor alpha variable 2 from Homo sapiens (Human).